A 97-amino-acid chain; its full sequence is Small ribosomal subunit protein uS19 (97 aa).

The protein belongs to the universal ribosomal protein uS19 family.

In terms of biological role, protein S19 forms a complex with S13 that binds strongly to the 16S ribosomal RNA. This Pelagibacter ubique (strain HTCC1062) protein is Small ribosomal subunit protein uS19.